The sequence spans 305 residues: Tyrosine recombinase XerC (305 aa).

The Core-binding (CB) domain occupies 4–95; it reads TSIQALINKW…AVKNFYRFLE (92 aa). The 183-residue stretch at 116–298 folds into the Tyr recombinase domain; that stretch reads LLPKALSEDD…SIKHLEAVYT (183 aa). Catalysis depends on residues R159, K182, H250, R253, and H276. Y285 functions as the O-(3'-phospho-DNA)-tyrosine intermediate in the catalytic mechanism.

It belongs to the 'phage' integrase family. XerC subfamily. As to quaternary structure, forms a cyclic heterotetrameric complex composed of two molecules of XerC and two molecules of XerD.

Its subcellular location is the cytoplasm. Functionally, site-specific tyrosine recombinase, which acts by catalyzing the cutting and rejoining of the recombining DNA molecules. The XerC-XerD complex is essential to convert dimers of the bacterial chromosome into monomers to permit their segregation at cell division. It also contributes to the segregational stability of plasmids. The sequence is that of Tyrosine recombinase XerC from Rickettsia rickettsii (strain Iowa).